Consider the following 309-residue polypeptide: GalNAc(5)-diNAcBac-PP-undecaprenol beta-1,3-glucosyltransferase (309 aa).

A helical membrane pass occupies residues 273 to 291; that stretch reads SLSIKINAPALILLILSII.

Belongs to the glycosyltransferase 2 family.

The protein localises to the membrane. It carries out the reaction [alpha-D-GalNAc-(1-&gt;4)]4-alpha-D-GalNAc-(1-&gt;3)-alpha-D-diNAcBac-tri-trans,hepta-cis-undecaprenyl diphosphate + UDP-alpha-D-glucose = [alpha-D-GalNAc-(1-&gt;4)]2-[beta-D-Glc-(1-&gt;3)]-[alpha-D-GalNAc-(1-&gt;4)]2-alpha-D-GalNAc-(1-&gt;3)-alpha-D-diNAcBac-tri-trans,hepta-cis-undecaprenyl diphosphate + UDP + H(+). The protein operates within protein modification; protein glycosylation. In terms of biological role, glucosyltransferase that adds he final branching glucose to complete the final heptasaccharide structure in the N-linked protein glycosylation pathway. This chain is GalNAc(5)-diNAcBac-PP-undecaprenol beta-1,3-glucosyltransferase (pglI), found in Campylobacter jejuni subsp. jejuni serotype O:2 (strain ATCC 700819 / NCTC 11168).